The chain runs to 962 residues: MLPLQGFNMTYPRKGVMPYPSTFLYREEPSVSTTECCCCWLCRLLCCCSTVDSQTALRDRMNASQPPPGGGGRLPDEVYRKIKAVDQGQSTLTQSGIQGLSARTLDENQRGDLVFQLVEIIKKPGQSLGLYLREGNGKDRSDGVFVSRFGDNSELAKSFLMSIDDVVLILSIPRRLLLRIRFSKSMRHEVITSRSSERPVVVFHKYDDRRDSETNAPILSQPTSTANTWLGKKSRQQMEEMRNATTTSTMRAAHASTSSPRNHFAPRLVNGHSQPIGVPSASSASTSDHHYQRFASEPSDSVSRTARVPPPRLASATVRRTESFNSAPGVSSSAPMYTLPRSSTAVPPPDIIGSIPHSARDPLMRSDLPYDPLTGRLSSSVPTDPLLSRSLCSPILPRTLRQPNDSNKSNSLPRRRIMTGGRNVKWRNDVVSTSDLCGEESDGAISAPEYSSPPFSRLTQQQQFRLSNGSPGRTVNDIFSAAEYRNWAGPYDPRGMYGPYPPGQRTTRWSHTYGEQRAPRTSSLPGRTVLAQSLVGSPVLPRHPPPIVQDRPSAVFDRYHVSPLMNRRAPLRAAGPGINVDRLSVSSLTGILYVHILEGRGLKIPEKQKGLTEEMYCVLEVDEQHRARTGVSTIEQKFKWRETFHIDVVNATVSNFFVYSWHPQFRHKLCHKGSLKLLEAFVVDQLNDDRVFALNLEPRGQLIVRIGFHDLQAVFRRTVNPRLNGVFGVPLGRLVQRERRDTPIVLTRLIQEIEKRGVDLSGLYVLCGSVEKKKMLRAQLESNPLGTDLNAENIPDTNVIACLIKDFLRELPEPLISPQIHGMLLEAATVALPNDVQANRTLVLKIIDCLQLSAKNCLLLVLDHLSTILCSSPHNGLTPTRLSLIFAPLLFFCLDAISPYTTSPTSKMAAVRSLDMNQASSSLQMILSIWPSRVNSESGSDSPATSGQKGGGGVSYVSESQC.

3 disordered regions span residues 231–367, 397–419, and 437–471; these read GKKS…MRSD, PRTL…RIMT, and CGEE…NGSP. Polar residues-rich tracts occupy residues 243–261, 323–345, 401–412, and 453–471; these read NATT…SSPR, SFNS…SSTA, RQPNDSNKSNSL, and PPFS…NGSP. The C2 domain maps to 572-696; that stretch reads RAAGPGINVD…NDDRVFALNL (125 aa). The Rho-GAP domain maps to 729 to 923; that stretch reads VPLGRLVQRE…LDMNQASSSL (195 aa). Residues 934–947 show a composition bias toward polar residues; that stretch reads VNSESGSDSPATSG. The tract at residues 934–962 is disordered; the sequence is VNSESGSDSPATSGQKGGGGVSYVSESQC.

It is found in the synapse. Its function is as follows. Probable GTPase activator for the Rho-type GTPases by converting them to an inactive GDP-bound state. Regulates the localization and assembly of presynaptic components during presynaptic development and is required for specifying the identity of axons during initial polarity acquisition. In these roles it is thought to act cell autonomously downstream of syg-1 and syg-2 and upstream of syd-2, possibly as a positive regulator of the latter. Required for the control of movement, egg-laying and the correct localization of elks-1. The chain is Rho GTPase-activating protein syd-1 from Caenorhabditis briggsae.